The sequence spans 305 residues: Nucleotide-binding protein Mpe_A3336 (305 aa).

22–29 serves as a coordination point for ATP; it reads GISGSGKS. 74-77 contacts GTP; it reads DVRS.

This sequence belongs to the RapZ-like family.

In terms of biological role, displays ATPase and GTPase activities. The chain is Nucleotide-binding protein Mpe_A3336 from Methylibium petroleiphilum (strain ATCC BAA-1232 / LMG 22953 / PM1).